The following is a 320-amino-acid chain: Methionyl-tRNA formyltransferase (320 aa).

117–120 provides a ligand contact to (6S)-5,6,7,8-tetrahydrofolate; that stretch reads SLLP.

This sequence belongs to the Fmt family.

The catalysed reaction is L-methionyl-tRNA(fMet) + (6R)-10-formyltetrahydrofolate = N-formyl-L-methionyl-tRNA(fMet) + (6S)-5,6,7,8-tetrahydrofolate + H(+). Functionally, attaches a formyl group to the free amino group of methionyl-tRNA(fMet). The formyl group appears to play a dual role in the initiator identity of N-formylmethionyl-tRNA by promoting its recognition by IF2 and preventing the misappropriation of this tRNA by the elongation apparatus. This Bordetella petrii (strain ATCC BAA-461 / DSM 12804 / CCUG 43448) protein is Methionyl-tRNA formyltransferase.